Reading from the N-terminus, the 250-residue chain is Tripartite motif-containing protein 73 (250 aa).

The RING-type zinc-finger motif lies at 16–57 (CPICLEVFKESLMLQCGHSYCKGCLVSLSYHLDTKVRCPMCW). The B box-type zinc-finger motif lies at 84–125 (PEPKVCVHHRNPLSLFCEKDQELICGLCGLLGSHQHHPVTPV). Positions 89, 92, 111, and 117 each coordinate Zn(2+). 2 coiled-coil regions span residues 125–169 (VSTV…NESD) and 204–235 (LVASLDMQLEQAQGTRERLAQAECVLEQFGNE).

This sequence belongs to the TRIM/RBCC family.

This chain is Tripartite motif-containing protein 73 (TRIM73), found in Homo sapiens (Human).